Here is a 357-residue protein sequence, read N- to C-terminus: Aspartate carbamoyltransferase catalytic subunit (357 aa).

A compositionally biased stretch (polar residues) spans 1-17; that stretch reads MSNSIDSQSIPTISPTD. The disordered stretch occupies residues 1 to 21; that stretch reads MSNSIDSQSIPTISPTDYTKF. 2 residues coordinate carbamoyl phosphate: Arg97 and Thr98. An L-aspartate-binding site is contributed by Lys125. 3 residues coordinate carbamoyl phosphate: Arg147, His177, and Gln180. Arg211 and Arg266 together coordinate L-aspartate. Positions 307 and 308 each coordinate carbamoyl phosphate.

Belongs to the aspartate/ornithine carbamoyltransferase superfamily. ATCase family. As to quaternary structure, heterododecamer (2C3:3R2) of six catalytic PyrB chains organized as two trimers (C3), and six regulatory PyrI chains organized as three dimers (R2).

It catalyses the reaction carbamoyl phosphate + L-aspartate = N-carbamoyl-L-aspartate + phosphate + H(+). Its pathway is pyrimidine metabolism; UMP biosynthesis via de novo pathway; (S)-dihydroorotate from bicarbonate: step 2/3. Functionally, catalyzes the condensation of carbamoyl phosphate and aspartate to form carbamoyl aspartate and inorganic phosphate, the committed step in the de novo pyrimidine nucleotide biosynthesis pathway. The polypeptide is Aspartate carbamoyltransferase catalytic subunit (Psychrobacter arcticus (strain DSM 17307 / VKM B-2377 / 273-4)).